Consider the following 248-residue polypeptide: Probable transcriptional regulatory protein Msil_2305 (248 aa).

This sequence belongs to the TACO1 family.

Its subcellular location is the cytoplasm. This chain is Probable transcriptional regulatory protein Msil_2305, found in Methylocella silvestris (strain DSM 15510 / CIP 108128 / LMG 27833 / NCIMB 13906 / BL2).